The sequence spans 2061 residues: Myoferlin (2061 aa).

Residues Met-1 to Tyr-101 enclose the C2 1 domain. At Met-1–Lys-2025 the chain is on the cytoplasmic side. The tract at residues Gly-123 to Thr-172 is disordered. Residues Asp-146 to Arg-156 show a composition bias toward acidic residues. Position 174 is a phosphoserine (Ser-174). C2 domains follow at residues Arg-181–Leu-300 and Asp-339–Phe-474. A necessary for interaction with EHD2 region spans residues Lys-186–Lys-281. A disordered region spans residues Leu-323 to Asp-342. Asp-390, Asp-396, Asp-444, Asp-446, and Asp-452 together coordinate Ca(2+). Lys-553 carries the post-translational modification N6-acetyllysine. Position 729 is a phosphoserine (Ser-729). Lys-884 is subject to N6-acetyllysine. The interval Glu-938–Leu-967 is disordered. 2 consecutive C2 domains span residues Gly-1123–His-1251 and Leu-1282–Asp-1410. Positions 1155, 1161, 1217, and 1219 each coordinate Ca(2+). An N6-acetyllysine modification is found at Lys-1507. C2 domains lie at Pro-1536 to Gly-1654 and Gly-1772 to Arg-1920. Positions 1569, 1575, 1624, 1626, 1891, 1894, and 1897 each coordinate Ca(2+). Position 1915 is a phosphoserine (Ser-1915). A helical transmembrane segment spans residues Trp-2026 to Tyr-2046. Residues Ser-2047–Val-2061 lie on the Extracellular side of the membrane.

The protein belongs to the ferlin family. As to quaternary structure, interacts with DNM2 and KDR. Interacts with EHD1. Interacts with EHD2; the interaction is direct. Interacts with RIPOR2. Ca(2+) serves as cofactor. In terms of tissue distribution, expressed in myoblast and endothelial cells (at protein level). Highly expressed in cardiac and skeletal muscles. Also present in lung, and at very low levels in kidney, placenta and brain.

It localises to the cell membrane. The protein localises to the nucleus membrane. The protein resides in the cytoplasmic vesicle membrane. Calcium/phospholipid-binding protein that plays a role in the plasmalemma repair mechanism of endothelial cells that permits rapid resealing of membranes disrupted by mechanical stress. Involved in endocytic recycling. Implicated in VEGF signal transduction by regulating the levels of the receptor KDR. This Homo sapiens (Human) protein is Myoferlin (MYOF).